A 317-amino-acid chain; its full sequence is Metaxin-1 (317 aa).

Residues Lys-38, Lys-41, and Lys-78 each participate in a glycyl lysine isopeptide (Lys-Gly) (interchain with G-Cter in ubiquitin) cross-link. A helical transmembrane segment spans residues 164-184 (EELEKELYREARECLTLLSQR).

The protein belongs to the metaxin family. Interacts with MTX2/metaxin-2. Associates with the mitochondrial contact site and cristae organizing system (MICOS) complex, composed of at least MICOS10/MIC10, CHCHD3/MIC19, CHCHD6/MIC25, APOOL/MIC27, IMMT/MIC60, APOO/MIC23/MIC26 and QIL1/MIC13. This complex was also known under the names MINOS or MitOS complex. The MICOS complex associates with mitochondrial outer membrane proteins SAMM50, MTX1 and MTX2 (together described as components of the mitochondrial outer membrane sorting assembly machinery (SAM) complex) and DNAJC11, mitochondrial inner membrane protein TMEM11 and with HSPA9. The MICOS and SAM complexes together with DNAJC11 are part of a large protein complex spanning both membranes termed the mitochondrial intermembrane space bridging (MIB) complex. Interacts with ARMC1. Post-translationally, ubiquitinated by PRKN during mitophagy, leading to its degradation and enhancement of mitophagy. Deubiquitinated by USP30.

The protein resides in the mitochondrion outer membrane. Functionally, involved in transport of proteins into the mitochondrion. Essential for embryonic development. In Macaca fascicularis (Crab-eating macaque), this protein is Metaxin-1 (MTX1).